The following is a 302-amino-acid chain: Sulfate adenylyltransferase subunit 2 (302 aa).

The protein belongs to the PAPS reductase family. CysD subfamily. In terms of assembly, heterodimer composed of CysD, the smaller subunit, and CysN.

It catalyses the reaction sulfate + ATP + H(+) = adenosine 5'-phosphosulfate + diphosphate. It functions in the pathway sulfur metabolism; hydrogen sulfide biosynthesis; sulfite from sulfate: step 1/3. Its function is as follows. With CysN forms the ATP sulfurylase (ATPS) that catalyzes the adenylation of sulfate producing adenosine 5'-phosphosulfate (APS) and diphosphate, the first enzymatic step in sulfur assimilation pathway. APS synthesis involves the formation of a high-energy phosphoric-sulfuric acid anhydride bond driven by GTP hydrolysis by CysN coupled to ATP hydrolysis by CysD. The sequence is that of Sulfate adenylyltransferase subunit 2 from Salmonella schwarzengrund (strain CVM19633).